Here is a 392-residue protein sequence, read N- to C-terminus: Sulfate adenylyltransferase (392 aa).

The protein belongs to the sulfate adenylyltransferase family.

It carries out the reaction sulfate + ATP + H(+) = adenosine 5'-phosphosulfate + diphosphate. The protein operates within sulfur metabolism; hydrogen sulfide biosynthesis; sulfite from sulfate: step 1/3. This Nostoc punctiforme (strain ATCC 29133 / PCC 73102) protein is Sulfate adenylyltransferase.